A 437-amino-acid polypeptide reads, in one-letter code: Methylenetetrahydrofolate--tRNA-(uracil-5-)-methyltransferase TrmFO (437 aa).

10–15 serves as a coordination point for FAD; it reads GGGLAG.

The protein belongs to the MnmG family. TrmFO subfamily. The cofactor is FAD.

The protein resides in the cytoplasm. The catalysed reaction is uridine(54) in tRNA + (6R)-5,10-methylene-5,6,7,8-tetrahydrofolate + NADH + H(+) = 5-methyluridine(54) in tRNA + (6S)-5,6,7,8-tetrahydrofolate + NAD(+). It carries out the reaction uridine(54) in tRNA + (6R)-5,10-methylene-5,6,7,8-tetrahydrofolate + NADPH + H(+) = 5-methyluridine(54) in tRNA + (6S)-5,6,7,8-tetrahydrofolate + NADP(+). Its function is as follows. Catalyzes the folate-dependent formation of 5-methyl-uridine at position 54 (M-5-U54) in all tRNAs. The polypeptide is Methylenetetrahydrofolate--tRNA-(uracil-5-)-methyltransferase TrmFO (Geotalea daltonii (strain DSM 22248 / JCM 15807 / FRC-32) (Geobacter daltonii)).